Consider the following 1006-residue polypeptide: Probable beta-galactosidase A (1006 aa).

Residues 1 to 18 (MKLLSVCAIALLAAQAAG) form the signal peptide. Positions 96, 140, 141, and 142 each coordinate substrate. A glycan (N-linked (GlcNAc...) asparagine) is linked at N156. Position 199 (N199) interacts with substrate. Catalysis depends on E200, which acts as the Proton donor. Residues C205 and C206 are joined by a disulfide bond. Residue Y260 participates in substrate binding. A disulfide bridge links C266 with C315. E298 (nucleophile) is an active-site residue. Residue Y364 participates in substrate binding. 7 N-linked (GlcNAc...) asparagine glycosylation sites follow: N373, N402, N422, N622, N760, N777, and N914.

It belongs to the glycosyl hydrolase 35 family.

The protein localises to the secreted. It carries out the reaction Hydrolysis of terminal non-reducing beta-D-galactose residues in beta-D-galactosides.. Its function is as follows. Cleaves beta-linked terminal galactosyl residues from gangliosides, glycoproteins, and glycosaminoglycans. This is Probable beta-galactosidase A (lacA) from Aspergillus fumigatus (strain CBS 144.89 / FGSC A1163 / CEA10) (Neosartorya fumigata).